The sequence spans 206 residues: Outer-membrane lipoprotein LolB (206 aa).

The signal sequence occupies residues 1 to 21 (MHERNYAVFRLLPLASLLLAA). Cys-22 is lipidated: N-palmitoyl cysteine. The S-diacylglycerol cysteine moiety is linked to residue Cys-22.

The protein belongs to the LolB family. As to quaternary structure, monomer.

It localises to the cell outer membrane. In terms of biological role, plays a critical role in the incorporation of lipoproteins in the outer membrane after they are released by the LolA protein. The protein is Outer-membrane lipoprotein LolB of Sodalis glossinidius (strain morsitans).